The primary structure comprises 162 residues: UPF0114 protein Pput_0713 (162 aa).

Transmembrane regions (helical) follow at residues 15–35 (LLAP…LKFF), 53–73 (LILV…LVMV), 109–126 (VAAS…RVFM), and 136–156 (LMWY…MGYL).

Belongs to the UPF0114 family.

It localises to the cell membrane. The chain is UPF0114 protein Pput_0713 from Pseudomonas putida (strain ATCC 700007 / DSM 6899 / JCM 31910 / BCRC 17059 / LMG 24140 / F1).